The chain runs to 89 residues: Large ribosomal subunit protein bL27 (89 aa).

A disordered region spans residues 1–24 (MAHKKAGGSSRNGRDSDGRRLGVK).

It belongs to the bacterial ribosomal protein bL27 family.

The chain is Large ribosomal subunit protein bL27 from Azorhizobium caulinodans (strain ATCC 43989 / DSM 5975 / JCM 20966 / LMG 6465 / NBRC 14845 / NCIMB 13405 / ORS 571).